The following is a 173-amino-acid chain: Ribosome maturation factor RimM (173 aa).

One can recognise a PRC barrel domain in the interval 97–170 (EHEYYYHEII…RIRVHIMEGL (74 aa)).

Belongs to the RimM family. As to quaternary structure, binds ribosomal protein uS19.

The protein localises to the cytoplasm. An accessory protein needed during the final step in the assembly of 30S ribosomal subunit, possibly for assembly of the head region. Essential for efficient processing of 16S rRNA. May be needed both before and after RbfA during the maturation of 16S rRNA. It has affinity for free ribosomal 30S subunits but not for 70S ribosomes. In Shouchella clausii (strain KSM-K16) (Alkalihalobacillus clausii), this protein is Ribosome maturation factor RimM.